Here is a 65-residue protein sequence, read N- to C-terminus: uncharacterized protein (65 aa).

This is an uncharacterized protein from Bacillus subtilis (Bacteriophage phi-105).